We begin with the raw amino-acid sequence, 29 residues long: U1-pseudomyrmecitoxin-Pt1 subunit SS2 (29 aa).

This sequence belongs to the myrmexin family. Heterodimer composed of subunit SS2 and subunit LS1 (U1-PSDTX-Pt1e), and heterodimer composed of subunit SS2 and LS2 (U1-PSDTX-Pt1c); disulfide-linked. Expressed by the venom gland.

It is found in the secreted. This heterodimer may have anti-inflammatory properties, since the myrmexin complex (composed of 6 SS-LS heterodimers) inhibits carrageenin-induced edema in a dose-dependent manner (after subcutaneous injection into rats). This chain is U1-pseudomyrmecitoxin-Pt1 subunit SS2, found in Pseudomyrmex triplarinus (Ant).